Here is a 499-residue protein sequence, read N- to C-terminus: Aspartyl/glutamyl-tRNA(Asn/Gln) amidotransferase subunit B (499 aa).

This sequence belongs to the GatB/GatE family. GatB subfamily. In terms of assembly, heterotrimer of A, B and C subunits.

It carries out the reaction L-glutamyl-tRNA(Gln) + L-glutamine + ATP + H2O = L-glutaminyl-tRNA(Gln) + L-glutamate + ADP + phosphate + H(+). The catalysed reaction is L-aspartyl-tRNA(Asn) + L-glutamine + ATP + H2O = L-asparaginyl-tRNA(Asn) + L-glutamate + ADP + phosphate + 2 H(+). Allows the formation of correctly charged Asn-tRNA(Asn) or Gln-tRNA(Gln) through the transamidation of misacylated Asp-tRNA(Asn) or Glu-tRNA(Gln) in organisms which lack either or both of asparaginyl-tRNA or glutaminyl-tRNA synthetases. The reaction takes place in the presence of glutamine and ATP through an activated phospho-Asp-tRNA(Asn) or phospho-Glu-tRNA(Gln). This Leifsonia xyli subsp. xyli (strain CTCB07) protein is Aspartyl/glutamyl-tRNA(Asn/Gln) amidotransferase subunit B.